The primary structure comprises 265 residues: Probable FAD synthase (265 aa).

This sequence belongs to the PAPS reductase family. FAD1 subfamily.

It carries out the reaction FMN + ATP + H(+) = FAD + diphosphate. It functions in the pathway cofactor biosynthesis; FAD biosynthesis; FAD from FMN: step 1/1. Adenylates FMN to FAD. This is Probable FAD synthase from Schizosaccharomyces pombe (strain 972 / ATCC 24843) (Fission yeast).